The chain runs to 185 residues: Ribosome-recycling factor (185 aa).

The protein belongs to the RRF family.

The protein resides in the cytoplasm. In terms of biological role, responsible for the release of ribosomes from messenger RNA at the termination of protein biosynthesis. May increase the efficiency of translation by recycling ribosomes from one round of translation to another. The polypeptide is Ribosome-recycling factor (Hahella chejuensis (strain KCTC 2396)).